Here is a 296-residue protein sequence, read N- to C-terminus: Nucleotide-binding protein M6_Spy0559 (296 aa).

13–20 (GMSGAGKT) is a binding site for ATP. A GTP-binding site is contributed by 63–66 (DMRS).

This sequence belongs to the RapZ-like family.

In terms of biological role, displays ATPase and GTPase activities. This chain is Nucleotide-binding protein M6_Spy0559, found in Streptococcus pyogenes serotype M6 (strain ATCC BAA-946 / MGAS10394).